The following is a 243-amino-acid chain: Peptidyl-tRNA hydrolase (243 aa).

TRNA is bound at residue Y14. H19 acts as the Proton acceptor in catalysis. TRNA-binding residues include F64, N66, and N112. Positions 190–205 (KAEEEKPAKEMKDAGK) are enriched in basic and acidic residues. A disordered region spans residues 190-243 (KAEEEKPAKEMKDAGKKPASQSHIHQARNHNQPKLPATGPMADMLKKMFGKKGD). Over residues 208–221 (ASQSHIHQARNHNQ) the composition is skewed to polar residues.

It belongs to the PTH family. As to quaternary structure, monomer.

The protein localises to the cytoplasm. The enzyme catalyses an N-acyl-L-alpha-aminoacyl-tRNA + H2O = an N-acyl-L-amino acid + a tRNA + H(+). Hydrolyzes ribosome-free peptidyl-tRNAs (with 1 or more amino acids incorporated), which drop off the ribosome during protein synthesis, or as a result of ribosome stalling. Functionally, catalyzes the release of premature peptidyl moieties from peptidyl-tRNA molecules trapped in stalled 50S ribosomal subunits, and thus maintains levels of free tRNAs and 50S ribosomes. The chain is Peptidyl-tRNA hydrolase from Rhizobium johnstonii (strain DSM 114642 / LMG 32736 / 3841) (Rhizobium leguminosarum bv. viciae).